Reading from the N-terminus, the 487-residue chain is NADH-quinone oxidoreductase subunit N (487 aa).

13 helical membrane-spanning segments follow: residues 9-29 (PVLP…LGVF), 38-58 (VSVL…SLGG), 73-93 (FAGF…AMSL), 108-128 (VLVL…DFIA), 161-181 (FVLG…LYGF), 208-228 (IIAG…AVPF), 240-260 (PTPV…CLLV), 277-297 (VVTF…VVQT), 306-326 (SSIG…TLGI), 328-348 (GVLI…AVIL), 374-394 (AFVM…AGFW), 408-430 (LYTL…LRIV), and 452-472 (LVMA…APLV).

This sequence belongs to the complex I subunit 2 family. As to quaternary structure, NDH-1 is composed of 14 different subunits. Subunits NuoA, H, J, K, L, M, N constitute the membrane sector of the complex.

The protein localises to the cell inner membrane. It catalyses the reaction a quinone + NADH + 5 H(+)(in) = a quinol + NAD(+) + 4 H(+)(out). NDH-1 shuttles electrons from NADH, via FMN and iron-sulfur (Fe-S) centers, to quinones in the respiratory chain. The immediate electron acceptor for the enzyme in this species is believed to be ubiquinone. Couples the redox reaction to proton translocation (for every two electrons transferred, four hydrogen ions are translocated across the cytoplasmic membrane), and thus conserves the redox energy in a proton gradient. This chain is NADH-quinone oxidoreductase subunit N, found in Paramagnetospirillum magneticum (strain ATCC 700264 / AMB-1) (Magnetospirillum magneticum).